A 374-amino-acid polypeptide reads, in one-letter code: MAEPGEGLPEEVLALIFRHLSLRDRAAAARVCRAWAAAATCSAVWHDTKISCECELEGMLPPYLSACLDHIHNLRLEFEPSRKPSRRAAIELLMVLAGRAPGLRGLRLECRGEKPLFDAGRDVLEAVHAVCGAASQLRHLDLRRLSFTLDDALVLQAARSCPELHSLFLDNSTLVGSVGPGSVLELLEACPRLRALGLHLASLSHAILEALAAPDRAPFALLALRCACPEDARASPLPNEAWVALRRRHPGLAVELELEPALPAESVTRVLQPAVPVAALRLNLSGDTVGPVRFAAHHYAATLCALEVRAAASAELNAALEELAARCAALREVHCFCVVSHSVLDAFRAHCPRLRTYTLKLTREPHPWRPTLVA.

One can recognise an F-box domain in the interval 2 to 48; sequence AEPGEGLPEEVLALIFRHLSLRDRAAAARVCRAWAAAATCSAVWHDT.

In terms of assembly, directly interacts with SKP1 and CUL1.

Its function is as follows. Substrate-recognition component of the SCF (SKP1-CUL1-F-box protein)-type E3 ubiquitin ligase complex. The polypeptide is F-box/LRR-repeat protein 8 (FBXL8) (Homo sapiens (Human)).